We begin with the raw amino-acid sequence, 451 residues long: Tubulin alpha-1B chain (451 aa).

Positions 1–4 (MREC) match the MREC motif motif. The GTP site is built by Gly10, Gln11, Ala12, and Gln15. Position 40 is an N6,N6,N6-trimethyllysine; alternate (Lys40). N6-acetyllysine; alternate is present on Lys40. Ser48 carries the post-translational modification Phosphoserine. GTP contacts are provided by Glu71, Ala99, Ser140, Gly143, Gly144, Thr145, Gly146, Thr179, Glu183, Asn206, Tyr224, and Asn228. A Mg(2+)-binding site is contributed by Glu71. Ser232 is modified (phosphoserine). Leu252 serves as a coordination point for GTP. The active site involves Glu254. Position 282 is a 3'-nitrotyrosine (Tyr282). Lys326 participates in a covalent cross-link: Glycyl lysine isopeptide (Lys-Gly) (interchain with G-Cter in ubiquitin). Arg339 carries the post-translational modification Omega-N-methylarginine. A Glycyl lysine isopeptide (Lys-Gly) (interchain with G-Cter in ubiquitin) cross-link involves residue Lys370. Positions 432-451 (YEEVGVDSVEGEGEEEGEEY) are disordered. Residue Ser439 is modified to Phosphoserine. 5-glutamyl polyglutamate occurs at positions 443 and 445. Tyr451 bears the 3'-nitrotyrosine mark.

The protein belongs to the tubulin family. As to quaternary structure, heterodimer of alpha- and beta-tubulin. A typical microtubule is a hollow water-filled tube with an outer diameter of 25 nm and an inner diameter of 15 nM. Alpha-beta heterodimers associate head-to-tail to form protofilaments running lengthwise along the microtubule wall with the beta-tubulin subunit facing the microtubule plus end conferring a structural polarity. Microtubules usually have 13 protofilaments but different protofilament numbers can be found in some organisms and specialized cells. Interacts with gamma-tubulin; the interaction allows microtubules to nucleate from the gamma-tubulin ring complex (gTuRC). Nascent microtubule interacts (via alpha-tubulin MREC motif) with TTC5/STRAP; this interaction may result in tubulin mRNA-targeted degradation. Component of sperm flagellar doublet microtubules. The cofactor is Mg(2+). In terms of processing, some glutamate residues at the C-terminus are polyglutamylated, resulting in polyglutamate chains on the gamma-carboxyl group. Polyglutamylation plays a key role in microtubule severing by spastin (SPAST). SPAST preferentially recognizes and acts on microtubules decorated with short polyglutamate tails: severing activity by SPAST increases as the number of glutamates per tubulin rises from one to eight, but decreases beyond this glutamylation threshold. Glutamylation is also involved in cilia motility. Post-translationally, some glutamate residues at the C-terminus are monoglycylated but not polyglycylated due to the absence of functional TTLL10 in human. Monoglycylation is mainly limited to tubulin incorporated into cilia and flagella axonemes, which is required for their stability and maintenance. Flagella glycylation controls sperm motility. Both polyglutamylation and monoglycylation can coexist on the same protein on adjacent residues, and lowering glycylation levels increases polyglutamylation, and reciprocally. Acetylation of alpha chains at Lys-40 is located inside the microtubule lumen. This modification has been correlated with increased microtubule stability, intracellular transport and ciliary assembly. In terms of processing, methylation of alpha chains at Lys-40 is found in mitotic microtubules and is required for normal mitosis and cytokinesis contributing to genomic stability. Post-translationally, nitration of Tyr-451 is irreversible and interferes with normal dynein intracellular distribution. Undergoes a tyrosination/detyrosination cycle, the cyclic removal and re-addition of a C-terminal tyrosine residue by the enzymes tubulin tyrosine carboxypeptidase (MATCAP1/KIAA0895L, VASH1 or VASH2) and tubulin tyrosine ligase (TTL), respectively. In terms of processing, tyrosination promotes microtubule interaction with CAP-Gly domain-containing proteins such as CLIP1, CLIP2 and DCTN1. Tyrosination regulates the initiation of dynein-dynactin motility via interaction with DCTN1, which brings the dynein-dynactin complex into contact with microtubules. In neurons, tyrosinated tubulins mediate the initiation of retrograde vesicle transport. Post-translationally, detyrosination is involved in metaphase plate congression by guiding chromosomes during mitosis: detyrosination promotes interaction with CENPE, promoting pole-proximal transport of chromosomes toward the equator. Detyrosination increases microtubules-dependent mechanotransduction in dystrophic cardiac and skeletal muscle. In cardiomyocytes, detyrosinated microtubules are required to resist to contractile compression during contraction: detyrosination promotes association with desmin (DES) at force-generating sarcomeres, leading to buckled microtubules and mechanical resistance to contraction.

The protein localises to the cytoplasm. The protein resides in the cytoskeleton. It carries out the reaction GTP + H2O = GDP + phosphate + H(+). Functionally, tubulin is the major constituent of microtubules, protein filaments consisting of alpha- and beta-tubulin heterodimers. Microtubules grow by the addition of GTP-tubulin dimers to the microtubule end, where a stabilizing cap forms. Below the cap, tubulin dimers are in GDP-bound state, owing to GTPase activity of alpha-tubulin. This is Tubulin alpha-1B chain (TUBA1B) from Homo sapiens (Human).